A 293-amino-acid polypeptide reads, in one-letter code: B1-hordein (293 aa).

The first 19 residues, M1–A19, serve as a signal peptide directing secretion. The segment at Q20 to P90 is disordered. Residues P25–P81 are compositionally biased toward pro residues.

It belongs to the gliadin/glutenin family. In terms of tissue distribution, developing endosperm.

Its function is as follows. Sulfur-rich seed storage protein. In Hordeum vulgare (Barley), this protein is B1-hordein.